The sequence spans 332 residues: Cinnamoyl-CoA reductase 2 (332 aa).

NADP(+)-binding positions include 12-18, R37, K43, 63-64, 83-85, Y156, K160, 183-186, and S198; these read GAGGYIA, DL, TAS, and PVLV. A disulfide bridge links C149 with C157. Residue K160 is the Proton donor of the active site.

Belongs to the NAD(P)-dependent epimerase/dehydratase family. Dihydroflavonol-4-reductase subfamily. In terms of tissue distribution, expressed at low levels in leaves, stems and flowers.

The catalysed reaction is (E)-cinnamaldehyde + NADP(+) + CoA = (E)-cinnamoyl-CoA + NADPH + H(+). It participates in aromatic compound metabolism; phenylpropanoid biosynthesis. Functionally, cinnamoyl-CoA reductase probably involved in the formation of phenolic compounds associated with the hypersensitive response. Seems not to be involved in lignin biosynthesis. In Arabidopsis thaliana (Mouse-ear cress), this protein is Cinnamoyl-CoA reductase 2 (CCR2).